Consider the following 180-residue polypeptide: Shikimate kinase (180 aa).

Residue 14–19 (GAGKTC) coordinates ATP. A Mg(2+)-binding site is contributed by T18. D36, R60, and G82 together coordinate substrate. Residue R120 coordinates ATP. R139 is a binding site for substrate.

It belongs to the shikimate kinase family. In terms of assembly, monomer. Requires Mg(2+) as cofactor.

It localises to the cytoplasm. It carries out the reaction shikimate + ATP = 3-phosphoshikimate + ADP + H(+). Its pathway is metabolic intermediate biosynthesis; chorismate biosynthesis; chorismate from D-erythrose 4-phosphate and phosphoenolpyruvate: step 5/7. Catalyzes the specific phosphorylation of the 3-hydroxyl group of shikimic acid using ATP as a cosubstrate. This is Shikimate kinase from Stenotrophomonas maltophilia (strain K279a).